Here is a 125-residue protein sequence, read N- to C-terminus: Large ribosomal subunit protein uL22 (125 aa).

Belongs to the universal ribosomal protein uL22 family. As to quaternary structure, part of the 50S ribosomal subunit.

Its function is as follows. This protein binds specifically to 23S rRNA; its binding is stimulated by other ribosomal proteins, e.g. L4, L17, and L20. It is important during the early stages of 50S assembly. It makes multiple contacts with different domains of the 23S rRNA in the assembled 50S subunit and ribosome. Functionally, the globular domain of the protein is located near the polypeptide exit tunnel on the outside of the subunit, while an extended beta-hairpin is found that lines the wall of the exit tunnel in the center of the 70S ribosome. The chain is Large ribosomal subunit protein uL22 from Erythrobacter litoralis (strain HTCC2594).